Consider the following 145-residue polypeptide: Peroxide operon regulator (145 aa).

Positions 1-78 are DNA-binding; it reads MAAHELKEAL…SGLVKELTYG (78 aa). Zn(2+) is bound by residues Cys-96, Cys-99, Cys-136, and Cys-139.

It belongs to the Fur family. As to quaternary structure, homodimer. The cofactor is Mn(2+). Fe(2+) is required as a cofactor. Zn(2+) serves as cofactor. Post-translationally, possibly oxidized on a cysteine residue; the Cys-SOH formed in response to oxidative signaling may rapidly react with a Cys-SH to form a disulfide bond, leading to the loss of metal ion and inactivation of repressor function. Oxidized PerR can be further reduced by thiol reductants and repressor activity restored.

Its subcellular location is the cytoplasm. Its function is as follows. Hydrogen and organic peroxide sensor. Represses the expression of a regulon of peroxide-inducible genes such as katA, ahpC, ahpF, the heme biosynthesis operon (hemAXCDBL), fur, perR, zosA and mrgA. The chain is Peroxide operon regulator (perR) from Bacillus subtilis (strain 168).